A 674-amino-acid chain; its full sequence is DNA ligase (674 aa).

Residues 35–39 (DYDFD), 84–85 (SL), and Glu-118 contribute to the NAD(+) site. Lys-120 acts as the N6-AMP-lysine intermediate in catalysis. Positions 141, 184, 297, and 321 each coordinate NAD(+). The Zn(2+) site is built by Cys-415, Cys-418, Cys-433, and Cys-439. Residues 598–674 (LVNTNFEGLT…ITEDEFDALL (77 aa)) form the BRCT domain.

Belongs to the NAD-dependent DNA ligase family. LigA subfamily. Mg(2+) serves as cofactor. It depends on Mn(2+) as a cofactor.

The catalysed reaction is NAD(+) + (deoxyribonucleotide)n-3'-hydroxyl + 5'-phospho-(deoxyribonucleotide)m = (deoxyribonucleotide)n+m + AMP + beta-nicotinamide D-nucleotide.. In terms of biological role, DNA ligase that catalyzes the formation of phosphodiester linkages between 5'-phosphoryl and 3'-hydroxyl groups in double-stranded DNA using NAD as a coenzyme and as the energy source for the reaction. It is essential for DNA replication and repair of damaged DNA. This chain is DNA ligase, found in Chlorobium phaeovibrioides (strain DSM 265 / 1930) (Prosthecochloris vibrioformis (strain DSM 265)).